We begin with the raw amino-acid sequence, 394 residues long: Elongation factor Tu 1 (394 aa).

Residues 10 to 204 enclose the tr-type G domain; it reads KPHVNVGTIG…HLDTYIPEPE (195 aa). Residues 19 to 26 form a G1 region; sequence GHVDHGKT. 19-26 is a binding site for GTP; sequence GHVDHGKT. Position 26 (Thr-26) interacts with Mg(2+). The G2 stretch occupies residues 60 to 64; the sequence is GITIN. Residues 81-84 are G3; the sequence is DCPG. Residues 81 to 85 and 136 to 139 each bind GTP; these read DCPGH and NKCD. A G4 region spans residues 136 to 139; it reads NKCD. Residues 174–176 form a G5 region; it reads SAL.

The protein belongs to the TRAFAC class translation factor GTPase superfamily. Classic translation factor GTPase family. EF-Tu/EF-1A subfamily. In terms of assembly, monomer.

The protein resides in the cytoplasm. It carries out the reaction GTP + H2O = GDP + phosphate + H(+). Its function is as follows. GTP hydrolase that promotes the GTP-dependent binding of aminoacyl-tRNA to the A-site of ribosomes during protein biosynthesis. This Haemophilus influenzae (strain 86-028NP) protein is Elongation factor Tu 1.